The sequence spans 31 residues: Cytochrome b6-f complex subunit 6 (31 aa).

Residues 4 to 26 (LTSYFGFLLAALTITSALFIGLN) form a helical membrane-spanning segment.

This sequence belongs to the PetL family. In terms of assembly, the 4 large subunits of the cytochrome b6-f complex are cytochrome b6, subunit IV (17 kDa polypeptide, PetD), cytochrome f and the Rieske protein, while the 4 small subunits are PetG, PetL, PetM and PetN. The complex functions as a dimer.

Its subcellular location is the plastid. It localises to the chloroplast thylakoid membrane. Its function is as follows. Component of the cytochrome b6-f complex, which mediates electron transfer between photosystem II (PSII) and photosystem I (PSI), cyclic electron flow around PSI, and state transitions. PetL is important for photoautotrophic growth as well as for electron transfer efficiency and stability of the cytochrome b6-f complex. This Blitum bonus-henricus (Good King Henry) protein is Cytochrome b6-f complex subunit 6.